The following is a 360-amino-acid chain: Thioredoxin domain-containing protein 15 (360 aa).

Residues 1–32 (MVPAAGRRPPRVMRLLGWWQVLLWVLGLPVRG) form the signal peptide. Topologically, residues 33–321 (VEVAEESGRL…GPLPSTLIKS (289 aa)) are extracellular. The interval 141 to 173 (PDREEEYYTEPEVAESDAAPTEDSNNTESLKSP) is disordered. The span at 143–155 (REEEYYTEPEVAE) shows a compositional bias: acidic residues. The region spanning 153–296 (VAESDAAPTE…LKIFIFNQTG (144 aa)) is the Thioredoxin domain. N-linked (GlcNAc...) asparagine glycosylation is found at Asn-187, Asn-194, Asn-206, and Asn-293. Residues 322 to 342 (VDWLLVFSLFFLISFIMYATI) form a helical membrane-spanning segment. At 343 to 360 (RTESIRWLIPGQEQEHVE) the chain is on the cytoplasmic side.

The protein resides in the cell projection. Its subcellular location is the cilium membrane. Its function is as follows. Acts as a positive regulator of ciliary hedgehog signaling. Involved in ciliogenesis. In Homo sapiens (Human), this protein is Thioredoxin domain-containing protein 15 (TXNDC15).